The primary structure comprises 218 residues: Ependymin (218 aa).

The signal sequence occupies residues 1–20; the sequence is MHTVKLLCVVFSCLCAVAWG. 2 N-linked (GlcNAc...) asparagine glycosylation sites follow: Asn-74 and Asn-97.

It belongs to the ependymin family. In terms of assembly, forms disulfide-linked dimers. In terms of processing, binds calcium through the terminal sialic acids.

Its subcellular location is the secreted. May play a role in neural plasticity. May be involved during axon regeneration. This chain is Ependymin (epd), found in Devario aequipinnatus (Giant danio).